The following is a 439-amino-acid chain: GTPase Der (439 aa).

EngA-type G domains follow at residues 4–168 (PIVA…KDDE) and 177–352 (INIA…DNYT). GTP-binding positions include 10–17 (GRPNVGKS), 57–61 (DTGGI), 120–123 (NKID), 183–190 (GKPNVGKS), 230–234 (DTAGL), and 295–298 (NKWD). Residues 353 to 437 (KRVKTGVLND…GIKLEFRERK (85 aa)) enclose the KH-like domain.

It belongs to the TRAFAC class TrmE-Era-EngA-EngB-Septin-like GTPase superfamily. EngA (Der) GTPase family. In terms of assembly, associates with the 50S ribosomal subunit.

In terms of biological role, GTPase that plays an essential role in the late steps of ribosome biogenesis. The chain is GTPase Der from Clostridium botulinum (strain Langeland / NCTC 10281 / Type F).